A 141-amino-acid chain; its full sequence is Large ribosomal subunit protein uL16 (141 aa).

The protein belongs to the universal ribosomal protein uL16 family. In terms of assembly, part of the 50S ribosomal subunit.

Functionally, binds 23S rRNA and is also seen to make contacts with the A and possibly P site tRNAs. In Campylobacter concisus (strain 13826), this protein is Large ribosomal subunit protein uL16.